The following is a 304-amino-acid chain: Olfactory receptor 4K13 (304 aa).

Residues 1 to 25 are Extracellular-facing; it reads MERANHSVVSEFILLGLSKSQNLQI. Asn5 carries an N-linked (GlcNAc...) asparagine glycan. The helical transmembrane segment at 26-49 threads the bilayer; sequence LFFLGFSVVFVGIVLGNLLILVTV. Residues 50–57 are Cytoplasmic-facing; that stretch reads TFDSLLHT. The chain crosses the membrane as a helical span at residues 58-79; sequence PMYFLLSNLSCIDMILASFATP. Residues 80 to 100 are Extracellular-facing; the sequence is KMIVDFLRERKTISWWGCYSQ. A disulfide bridge connects residues Cys97 and Cys189. Residues 101 to 120 form a helical membrane-spanning segment; it reads MFFMHLLGGSEMMLLVAMAI. At 121–139 the chain is on the cytoplasmic side; it reads DRYVAICKPLHYMTIMSPR. Residues 140–158 form a helical membrane-spanning segment; the sequence is VLTGLLLSSYAVGFVHSSS. Residues 159 to 195 lie on the Extracellular side of the membrane; it reads QMAFMLTLPFCGPNVIDSFFCDLPLVIKLACKDTYIL. A helical membrane pass occupies residues 196–219; the sequence is QLLVIADSGLLSLVCFLLLLVSYG. Over 220–235 the chain is Cytoplasmic; that stretch reads VIIFSVRYRAASRSSK. The helical transmembrane segment at 236-258 threads the bilayer; sequence AFSTLSAHITVVTLFFAPCVFIY. Residues 259–269 are Extracellular-facing; that stretch reads VWPFSRYSVDK. A helical transmembrane segment spans residues 270-289; that stretch reads ILSVFYTIFTPLLNPIIYTL. Topologically, residues 290–304 are cytoplasmic; the sequence is RNQEVKAAIKKRLCI.

This sequence belongs to the G-protein coupled receptor 1 family.

It localises to the cell membrane. Odorant receptor. This Homo sapiens (Human) protein is Olfactory receptor 4K13 (OR4K13).